The chain runs to 824 residues: Leucine--tRNA ligase (824 aa).

The 'HIGH' region motif lies at 42–52; that stretch reads PYPSGRIHMGH. A 'KMSKS' region motif is present at residues 581–585; that stretch reads KMSKS. K584 provides a ligand contact to ATP.

This sequence belongs to the class-I aminoacyl-tRNA synthetase family.

It is found in the cytoplasm. The enzyme catalyses tRNA(Leu) + L-leucine + ATP = L-leucyl-tRNA(Leu) + AMP + diphosphate. The sequence is that of Leucine--tRNA ligase from Geobacter sulfurreducens (strain ATCC 51573 / DSM 12127 / PCA).